The primary structure comprises 333 residues: DNA-directed RNA polymerase subunit alpha (333 aa).

Positions 1–246 (MEKFIKINWT…AHLNIIGDVN (246 aa)) are alpha N-terminal domain (alpha-NTD). The segment at 263–333 (HSKTQNILIQ…YNVFLDKGEE (71 aa)) is alpha C-terminal domain (alpha-CTD).

The protein belongs to the RNA polymerase alpha chain family. In terms of assembly, homodimer. The RNAP catalytic core consists of 2 alpha, 1 beta, 1 beta' and 1 omega subunit. When a sigma factor is associated with the core the holoenzyme is formed, which can initiate transcription.

The enzyme catalyses RNA(n) + a ribonucleoside 5'-triphosphate = RNA(n+1) + diphosphate. DNA-dependent RNA polymerase catalyzes the transcription of DNA into RNA using the four ribonucleoside triphosphates as substrates. This chain is DNA-directed RNA polymerase subunit alpha, found in Mycoplasma mobile (strain ATCC 43663 / 163K / NCTC 11711) (Mesomycoplasma mobile).